Reading from the N-terminus, the 78-residue chain is MPRIYRVVGETATGMRFRVEVTAEKPYDAVEKVYSLIGSRHKLSRVQIKIREVAVVSPEEARSDAAKLLMAVDRVVRY.

The protein belongs to the eukaryotic ribosomal protein eL20 family. In terms of assembly, part of the 50S ribosomal subunit. Binds 23S rRNA.

The protein is Large ribosomal subunit protein eL20 of Pyrobaculum neutrophilum (strain DSM 2338 / JCM 9278 / NBRC 100436 / V24Sta) (Thermoproteus neutrophilus).